Here is a 300-residue protein sequence, read N- to C-terminus: Ribosomal protein L11 methyltransferase (300 aa).

S-adenosyl-L-methionine is bound by residues threonine 144, glycine 165, aspartate 187, and asparagine 235.

The protein belongs to the methyltransferase superfamily. PrmA family.

It is found in the cytoplasm. It catalyses the reaction L-lysyl-[protein] + 3 S-adenosyl-L-methionine = N(6),N(6),N(6)-trimethyl-L-lysyl-[protein] + 3 S-adenosyl-L-homocysteine + 3 H(+). In terms of biological role, methylates ribosomal protein L11. This Prochlorococcus marinus (strain MIT 9515) protein is Ribosomal protein L11 methyltransferase.